The chain runs to 142 residues: Large ribosomal subunit protein uL13 (142 aa).

The protein belongs to the universal ribosomal protein uL13 family. In terms of assembly, part of the 50S ribosomal subunit.

Functionally, this protein is one of the early assembly proteins of the 50S ribosomal subunit, although it is not seen to bind rRNA by itself. It is important during the early stages of 50S assembly. This Psychrobacter cryohalolentis (strain ATCC BAA-1226 / DSM 17306 / VKM B-2378 / K5) protein is Large ribosomal subunit protein uL13.